A 632-amino-acid chain; its full sequence is 1-deoxy-D-xylulose-5-phosphate synthase (632 aa).

Residues histidine 87 and 128-130 each bind thiamine diphosphate; that span reads GHS. Residue aspartate 159 participates in Mg(2+) binding. Residues 160-161, asparagine 188, phenylalanine 295, and glutamate 378 each bind thiamine diphosphate; that span reads GA. A Mg(2+)-binding site is contributed by asparagine 188.

It belongs to the transketolase family. DXPS subfamily. In terms of assembly, homodimer. It depends on Mg(2+) as a cofactor. Thiamine diphosphate serves as cofactor.

It carries out the reaction D-glyceraldehyde 3-phosphate + pyruvate + H(+) = 1-deoxy-D-xylulose 5-phosphate + CO2. The protein operates within metabolic intermediate biosynthesis; 1-deoxy-D-xylulose 5-phosphate biosynthesis; 1-deoxy-D-xylulose 5-phosphate from D-glyceraldehyde 3-phosphate and pyruvate: step 1/1. In terms of biological role, catalyzes the acyloin condensation reaction between C atoms 2 and 3 of pyruvate and glyceraldehyde 3-phosphate to yield 1-deoxy-D-xylulose-5-phosphate (DXP). The polypeptide is 1-deoxy-D-xylulose-5-phosphate synthase (Pseudomonas fluorescens (strain SBW25)).